Here is a 137-residue protein sequence, read N- to C-terminus: Large ribosomal subunit protein uL24 (137 aa).

It belongs to the universal ribosomal protein uL24 family. Part of the 50S ribosomal subunit.

One of two assembly initiator proteins, it binds directly to the 5'-end of the 23S rRNA, where it nucleates assembly of the 50S subunit. In terms of biological role, located at the polypeptide exit tunnel on the outside of the subunit. The protein is Large ribosomal subunit protein uL24 of Sulfurisphaera tokodaii (strain DSM 16993 / JCM 10545 / NBRC 100140 / 7) (Sulfolobus tokodaii).